Consider the following 85-residue polypeptide: Small ribosomal subunit protein uS17 (85 aa).

Belongs to the universal ribosomal protein uS17 family. As to quaternary structure, part of the 30S ribosomal subunit.

In terms of biological role, one of the primary rRNA binding proteins, it binds specifically to the 5'-end of 16S ribosomal RNA. The protein is Small ribosomal subunit protein uS17 of Acetivibrio thermocellus (strain ATCC 27405 / DSM 1237 / JCM 9322 / NBRC 103400 / NCIMB 10682 / NRRL B-4536 / VPI 7372) (Clostridium thermocellum).